The following is a 203-amino-acid chain: Ras-related protein Rab-7a (203 aa).

GTP is bound by residues 15-22, 34-40, 63-67, 125-128, and 157-158; these read GDSGVGKT, SNQYKAT, DTAGQ, NKID, and AK. The Effector region signature appears at 37-45; sequence YKATIGADF. Residues Cys202 and Cys203 are each lipidated (S-geranylgeranyl cysteine).

The protein belongs to the small GTPase superfamily. Rab family.

Its subcellular location is the late endosome membrane. It is found in the lysosome membrane. The protein resides in the cytoplasmic vesicle. The protein localises to the autophagosome membrane. It localises to the lipid droplet. It catalyses the reaction GTP + H2O = GDP + phosphate + H(+). In terms of biological role, small GTPase which cycles between active GTP-bound and inactive GDP-bound states. In its active state, binds to a variety of effector proteins playing a key role in the regulation of endo-lysosomal trafficking. Governs early-to-late endosomal maturation, microtubule minus-end as well as plus-end directed endosomal migration and positioning, and endosome-lysosome transport through different protein-protein interaction cascades. Involved in lipophagy, a cytosolic lipase-independent autophagic pathway. In Dictyostelium discoideum (Social amoeba), this protein is Ras-related protein Rab-7a (rab7A).